A 107-amino-acid polypeptide reads, in one-letter code: uncharacterized protein (107 aa).

Residues 1 to 4 (MSLV) lie on the Cytoplasmic side of the membrane. The helical transmembrane segment at 5–25 (IDIADTIVSLTALIGLIITLI) threads the bilayer. Residues 26–107 (KFHSQNKEDA…ELCRSSDRSK (82 aa)) are Extracellular-facing.

It localises to the host membrane. This is an uncharacterized protein from Acidianus sp. F28 (AFV-2).